The sequence spans 660 residues: Rhamnogalacturonate lyase B (660 aa).

The signal sequence occupies residues 1-18 (MRLGVCFSLAAAASVARA). N-linked (GlcNAc...) asparagine glycosylation is found at asparagine 25, asparagine 109, asparagine 142, and asparagine 284. The disordered stretch occupies residues 446–466 (RLGTPDKSSGEFRHGAARDPT). Basic and acidic residues predominate over residues 453–466 (SSGEFRHGAARDPT). 3 N-linked (GlcNAc...) asparagine glycosylation sites follow: asparagine 524, asparagine 566, and asparagine 635.

Belongs to the polysaccharide lyase 4 family.

It is found in the secreted. The catalysed reaction is Endotype eliminative cleavage of L-alpha-rhamnopyranosyl-(1-&gt;4)-alpha-D-galactopyranosyluronic acid bonds of rhamnogalacturonan I domains in ramified hairy regions of pectin leaving L-rhamnopyranose at the reducing end and 4-deoxy-4,5-unsaturated D-galactopyranosyluronic acid at the non-reducing end.. Functionally, pectinolytic enzymes consist of four classes of enzymes: pectin lyase, polygalacturonase, pectin methylesterase and rhamnogalacturonase. Degrades the rhamnogalacturonan I (RG-I) backbone of pectin. Active against linseed rhamnogalacturonan. This Emericella nidulans (strain FGSC A4 / ATCC 38163 / CBS 112.46 / NRRL 194 / M139) (Aspergillus nidulans) protein is Rhamnogalacturonate lyase B (rglB).